A 670-amino-acid polypeptide reads, in one-letter code: Protein ACCELERATED CELL DEATH 6 (670 aa).

The Cytoplasmic segment spans residues 1 to 456; sequence MDSSGADLDR…PNYIFHERWT (456 aa). The segment at 18–47 is disordered; the sequence is LVSHDQRKDFSHSGGVGTTSPTGDTEPVPK. 10 ANK repeats span residues 66-95, 100-129, 134-163, 182-211, 216-248, 260-290, 295-325, 329-358, 363-391, and 399-428; these read EMTP…PMER, TGDS…CLLF, SRQT…SALA, DGNT…DAPF, KGIS…NVDR, QGNK…SLMD, DGRT…GVYV, DGSF…ASKY, LGQN…DTKH, and DGNT…EILK. A helical membrane pass occupies residues 457 to 477; sequence LALLLYAIHSSGFESVKSLTI. At 478–492 the chain is on the extracellular side; it reads QSVPLDPKKNRHYVN. The helical transmembrane segment at 493-513 threads the bilayer; it reads ALLVVAALVATVTFAAGFTIP. Over 514-537 the chain is Cytoplasmic; it reads GGYISDSKKPNLGRATLATNPTLF. Residues 538–558 traverse the membrane as a helical segment; that stretch reads IFLLFDILAMQSSVATICTLI. At 559–577 the chain is on the extracellular side; the sequence is WAQLGDLALILKSLHVALP. The helical transmembrane segment at 578 to 598 threads the bilayer; the sequence is LLLFSLLCMPVAFLFGVITAI. Topologically, residues 599–602 are cytoplasmic; that stretch reads AHVK. Residues 603 to 623 form a helical membrane-spanning segment; the sequence is WLLVTISIISGGFFLFAIFIL. At 624 to 638 the chain is on the extracellular side; sequence GPHVMLQRSHLPPSS. A helical transmembrane segment spans residues 639 to 659; the sequence is GIFLKTFMLTIDISELFVILI. The Cytoplasmic portion of the chain corresponds to 660–670; it reads KACFGCVACSE.

Component of large complexes containing, at least, FLS2, HSP70 and ACD6 in endoplasmic reticulum, plasma membrane and soluble fraction. Associated with HSP70 proteins during endoplasmic reticulum-associated degradation (ERAD). Reduced complex levels upon benzothiazole (BTH) treatment. In terms of processing, ubiquitinated. As to expression, basal expression requires light and salicylic acid (SA).

It localises to the cell membrane. The protein resides in the endoplasmic reticulum membrane. In terms of biological role, dose-dependent activator of the defense response against virulent pathogens, including bacteria, fungi and oomycetes, that acts in a positive feedback loop with the defense signal salicylic acid (SA). Regulates the salicylic acid (SA) signaling pathway leading to cell death and modulating cell fate (e.g. cell enlargement and/or cell division). In response to SA signaling, triggers the accumulation of FLS2 at the plasma membrane, thus priming defenses. Involved in SA-dependent freezing signaling and tolerance. The chain is Protein ACCELERATED CELL DEATH 6 from Arabidopsis thaliana (Mouse-ear cress).